The chain runs to 217 residues: KS1 protein (217 aa).

The signal sequence occupies residues 1 to 16; the sequence is MKLIIVLVMMLVCVYS. The span at 24–47 shows a compositional bias: basic and acidic residues; sequence PKNHEVPAKKQFAETKVEKKKRSD. Disordered stretches follow at residues 24–58 and 72–205; these read PKNH…DDDD and EDDD…LKIK. Repeat copies occupy residues 32–81 and 98–147. Residues 32 to 147 are 2 X 50 AA approximate repeats; that stretch reads KKQFAETKVE…EEDDDCYDED (116 aa). Composition is skewed to acidic residues over residues 48 to 58 and 72 to 94; these read DGDEEICDDDD and EDDD…DDCQ. The segment covering 98–110 has biased composition (basic residues); that stretch reads KKKKRETKPKLKK. The span at 114–145 shows a compositional bias: acidic residues; that stretch reads DEEEEECEEDDEDCEVEVDIEECDEEDDDCYD. The segment covering 149 to 188 has biased composition (basic residues); sequence KKKKENKLKKESKKKNSKKTVPKNAKKSSKRSTSTKKTSQ.

In terms of tissue distribution, expressed in tentacle-specific epithelial cells (battery cells) as well as in a small fraction of ectodermal epithelial cells in the gastric region subjacent to the tentacles (the tentacle formation region). The later cells are committed to become battery cells.

Its function is as follows. Responds to early signals of head formation in hydra. In Hydra vulgaris (Hydra), this protein is KS1 protein (KS1).